The primary structure comprises 156 residues: MSRRHKAERREVIPDPKYGSTTLSRFMNSVMRDGKKSVAEGIVYGALDVVETKAKHDPVDVFIQALENVAPAVEVRSRRVGGATYQVPVEVRNERRQTLAIRWLIASARARNEKTMVERLSAELLDAANNRGAAVKKREDTHRMAEANRAFSHYRW.

Belongs to the universal ribosomal protein uS7 family. Part of the 30S ribosomal subunit. Contacts proteins S9 and S11.

In terms of biological role, one of the primary rRNA binding proteins, it binds directly to 16S rRNA where it nucleates assembly of the head domain of the 30S subunit. Is located at the subunit interface close to the decoding center, probably blocks exit of the E-site tRNA. In Xanthobacter autotrophicus (strain ATCC BAA-1158 / Py2), this protein is Small ribosomal subunit protein uS7.